Consider the following 199-residue polypeptide: Ribonuclease P protein subunit p25 (199 aa).

Over residues 1 to 11 (MENFRKVRSEE) the composition is skewed to basic and acidic residues. Disordered regions lie at residues 1–31 (MENF…FADL) and 146–199 (PRQL…DRTA). Ser172 carries the phosphoserine modification. Acidic residues predominate over residues 190–199 (PEAENEDRTA).

The protein belongs to the histone-like Alba family. Component of nuclear RNase P and RNase MRP ribonucleoproteins. RNase P consists of a catalytic RNA moiety and 10 different protein chains; POP1, POP4, POP5, POP7, RPP14, RPP21, RPP25, RPP30, RPP38 and RPP40. Within the RNase P complex, POP1, POP7 and RPP25 form the 'finger' subcomplex, POP5, RPP14, RPP40 and homodimeric RPP30 form the 'palm' subcomplex, and RPP21, POP4 and RPP38 form the 'wrist' subcomplex. All subunits of the RNase P complex interact with the catalytic RNA. Several subunits of RNase P are also part of the RNase MRP complex. RNase MRP consists of a catalytic RNA moiety and about 8 protein subunits; POP1, POP7, RPP25, RPP30, RPP38, RPP40 and possibly also POP4 and POP5. POP7 forms a heterodimer with RPP25 that binds to the P3 stem loop of the catalytic RNA.

It is found in the nucleus. Its subcellular location is the nucleolus. Its function is as follows. Component of ribonuclease P, a ribonucleoprotein complex that generates mature tRNA molecules by cleaving their 5'-ends. Also a component of the MRP ribonuclease complex, which cleaves pre-rRNA sequences. The sequence is that of Ribonuclease P protein subunit p25 (Rpp25) from Mus musculus (Mouse).